A 224-amino-acid polypeptide reads, in one-letter code: UPF0173 metal-dependent hydrolase STH3160 (224 aa).

This sequence belongs to the UPF0173 family.

In Symbiobacterium thermophilum (strain DSM 24528 / JCM 14929 / IAM 14863 / T), this protein is UPF0173 metal-dependent hydrolase STH3160.